Consider the following 395-residue polypeptide: Choline/ethanolamine kinase (395 aa).

At Ala-2 the chain carries N-acetylalanine. ATP is bound by residues 75 to 81, Arg-104, 146 to 152, Gln-244, and Asp-264; these read SGGLSNL and QYIPSRP. Phosphocholine is bound at residue 77–79; that stretch reads GLS.

The protein belongs to the choline/ethanolamine kinase family. As to quaternary structure, homodimer, and heterodimer with CHKA.

It carries out the reaction choline + ATP = phosphocholine + ADP + H(+). The catalysed reaction is ethanolamine + ATP = phosphoethanolamine + ADP + H(+). The protein operates within phospholipid metabolism; phosphatidylethanolamine biosynthesis; phosphatidylethanolamine from ethanolamine: step 1/3. In terms of biological role, has a key role in phospholipid metabolism, and catalyzes the first step of phosphatidylethanolamine and phosphatidylcholine biosynthesis. The protein is Choline/ethanolamine kinase (CHKB) of Homo sapiens (Human).